We begin with the raw amino-acid sequence, 479 residues long: Glycogen synthase (479 aa).

Lys15 lines the ADP-alpha-D-glucose pocket.

It belongs to the glycosyltransferase 1 family. Bacterial/plant glycogen synthase subfamily.

It catalyses the reaction [(1-&gt;4)-alpha-D-glucosyl](n) + ADP-alpha-D-glucose = [(1-&gt;4)-alpha-D-glucosyl](n+1) + ADP + H(+). The protein operates within glycan biosynthesis; glycogen biosynthesis. Its function is as follows. Synthesizes alpha-1,4-glucan chains using ADP-glucose. This Histophilus somni (strain 129Pt) (Haemophilus somnus) protein is Glycogen synthase.